A 557-amino-acid chain; its full sequence is Tight junction-associated protein 1 (557 aa).

A disordered region spans residues 1–37 (MTSAAPAKKPYRKAPPEHRELRLEIPGSRLEQEEPLT). Threonine 2 is modified (N-acetylthreonine). A compositionally biased stretch (basic and acidic residues) spans 14 to 23 (APPEHRELRL). Residues 42–171 (MKLLQEENEE…EELNERYRLD (130 aa)) are a coiled coil. 2 disordered regions span residues 266 to 303 (MSEGVPGDPASPPAPGSPTPQPNGECHSLGTARGSPEE) and 309 to 328 (AFEKLNPYPTPSPPHPLYPG). A compositionally biased stretch (pro residues) spans 274 to 286 (PASPPAPGSPTPQ). Phosphoserine is present on serine 300. Over residues 316–325 (YPTPSPPHPL) the composition is skewed to pro residues. Threonine 318 carries the phosphothreonine modification. Serine 320 and serine 345 each carry phosphoserine. The interval 364-409 (EEGSERARPSPVPSTPASAQASPHHQPSPAPLTLSAPASSASSEED) is disordered. Residues 378–388 (TPASAQASPHH) are compositionally biased toward polar residues. The span at 394–405 (PLTLSAPASSAS) shows a compositional bias: low complexity. Residue threonine 422 is modified to Phosphothreonine. Positions 439–456 (LPELQRHFAHSPADRDEV) are enriched in basic and acidic residues. The tract at residues 439–557 (LPELQRHFAH…QAQEQGNLLN (119 aa)) is disordered. Residue serine 491 is modified to Phosphoserine. Positions 530-542 (RSPKRMGVHHLHR) are enriched in basic residues. Position 545 is a phosphoserine (serine 545). Polar residues predominate over residues 546–557 (LTQAQEQGNLLN).

Interacts with DLG1. Interacts with ARF6 (GTP-bound form). Ubiquitously expressed.

The protein resides in the golgi apparatus. It localises to the trans-Golgi network. Its subcellular location is the cell junction. The protein localises to the tight junction. It is found in the cell membrane. Plays a role in regulating the structure of the Golgi apparatus. This Homo sapiens (Human) protein is Tight junction-associated protein 1.